Consider the following 1091-residue polypeptide: Leucine--tRNA ligase, cytoplasmic (1091 aa).

The short motif at 53–63 (PYMNGYLHIGH) is the 'HIGH' region element. The 'KMSKS' region signature appears at 715–719 (KMSKS). Position 718 (lysine 718) interacts with ATP.

This sequence belongs to the class-I aminoacyl-tRNA synthetase family.

It is found in the cytoplasm. Its subcellular location is the cytosol. It carries out the reaction tRNA(Leu) + L-leucine + ATP = L-leucyl-tRNA(Leu) + AMP + diphosphate. In terms of biological role, catalyzes the specific attachment of an amino acid to its cognate tRNA in a two step reaction: the amino acid (AA) is first activated by ATP to form AA-AMP and then transferred to the acceptor end of the tRNA. The polypeptide is Leucine--tRNA ligase, cytoplasmic (Arabidopsis thaliana (Mouse-ear cress)).